The following is a 184-amino-acid chain: Large ribosomal subunit protein uL6 (184 aa).

The protein belongs to the universal ribosomal protein uL6 family. As to quaternary structure, part of the 50S ribosomal subunit.

In terms of biological role, this protein binds to the 23S rRNA, and is important in its secondary structure. It is located near the subunit interface in the base of the L7/L12 stalk, and near the tRNA binding site of the peptidyltransferase center. The sequence is that of Large ribosomal subunit protein uL6 from Desulfurococcus amylolyticus (strain DSM 18924 / JCM 16383 / VKM B-2413 / 1221n) (Desulfurococcus kamchatkensis).